Here is a 275-residue protein sequence, read N- to C-terminus: MRRISPTRFLLYIVLIFLAAWYLLPIWSAITTSTKTGEQVALTTPVQFVFPPTFDPYREAFRELKRPILNSLIFTTFATIFSTILGSIAGFTIAKLVRGRVSRQLLALISFGIFLPYQSILIPLVKIISSLGLYNRILGLILTHTAYGIPITTLLFTNYYYEIPDELVEAAKIDGADPWKIYTKVILPLSKAPFVVTGIYQFTNIWNDYLFGVVLTRGEEAMPATVKLANLKGSFVANWNIQMAGALIVALPTLLIMIALGKYLIRGYTSGALKG.

A run of 6 helical transmembrane segments spans residues 10 to 30 (LLYI…WSAI), 73 to 93 (IFTT…GFTI), 105 to 125 (LLAL…IPLV), 137 to 157 (ILGL…LLFT), 181 to 203 (IYTK…YQFT), and 241 to 261 (IQMA…IALG). The region spanning 68–260 (ILNSLIFTTF…LPTLLIMIAL (193 aa)) is the ABC transmembrane type-1 domain.

Belongs to the binding-protein-dependent transport system permease family. MalFG subfamily.

Its subcellular location is the cell membrane. In terms of biological role, probably part of a binding-protein-dependent transport system PH1214/15/16. Probably responsible for the translocation of the substrate across the membrane. The polypeptide is Probable ABC transporter permease protein PH1216 (Pyrococcus horikoshii (strain ATCC 700860 / DSM 12428 / JCM 9974 / NBRC 100139 / OT-3)).